Here is a 351-residue protein sequence, read N- to C-terminus: MIPLDRLRQITERFQYLEAAMAAGDGAADIAALAKEYSDLRPVVEQISAYQQLLSDLEDAAEMLGDPDMAPLAEEEIPRLKSALPQAEAALQLALLPKDKADAKPAMLEIRPGTGGDEAALFAGDLFRMYQRYAETQGWKVDLIELQETELGGIKEVVAHIKGADVFARLKYESGVHRVQRVPSTESGGRIHTSAATVAVLPEAEDVDIHIDANDLRIDTMRSSGAGGQHVNTTDSAVRITHLPTGLVVTSSEKSQHRNREIAMQVLKARLYDLERSRVDDERSADRAAQVGSGDRSERIRTYNFPQGRMTDHRINLTLYRLDAVLQGDLDEIIDALTAHAQAQLMADMGQ.

Glutamine 229 carries the N5-methylglutamine modification. The tract at residues 278 to 297 (RVDDERSADRAAQVGSGDRS) is disordered.

It belongs to the prokaryotic/mitochondrial release factor family. Post-translationally, methylated by PrmC. Methylation increases the termination efficiency of RF1.

The protein localises to the cytoplasm. Functionally, peptide chain release factor 1 directs the termination of translation in response to the peptide chain termination codons UAG and UAA. This Roseobacter denitrificans (strain ATCC 33942 / OCh 114) (Erythrobacter sp. (strain OCh 114)) protein is Peptide chain release factor 1.